The chain runs to 57 residues: Small hydrophobic protein (57 aa).

Topologically, residues 1 to 8 are virion surface; that stretch reads MPAIQPPL. Residues 9–29 form a helical membrane-spanning segment; that stretch reads YPTFLLLILLSLIITLYVWII. Topologically, residues 30–57 are intravirion; sequence STITYKTAVRHAALHQRSFSRWSLDHSL.

The protein belongs to the rubulavirus small hydrophobic protein family. In terms of assembly, interacts with host TNFRSF1A, RIPK1 and IRAK1; these interactions interfere with host NF-kappa-B activation at the level of receptor complexes. Interacts with host protein UBQLN4.

It localises to the virion membrane. The protein localises to the host cell membrane. Its function is as follows. Plays a role in the inhibition of the host NF-kappa-B pathway. This inhibition occurs at the receptor level, by preventing the signaling of TNFR1 as well as IL-1R and TLR3. In Mumps virus genotype B (strain Miyahara vaccine) (MuV), this protein is Small hydrophobic protein (SH).